Consider the following 829-residue polypeptide: E3 ubiquitin-protein ligase Jade-2 (829 aa).

A disordered region spans residues 1-52 (MEEKRRKYSISSDNSDTTDGHVTSTSASRCSKLPSSTKSGWPRQNEKKPSEV). Residues Ser-9 and Ser-15 each carry the phosphoserine modification. Polar residues predominate over residues 9–39 (SISSDNSDTTDGHVTSTSASRCSKLPSSTKS). N6-acetyllysine is present on residues Lys-32 and Lys-38. At Ser-117 the chain carries Phosphoserine. The segment at 199–249 (DVVCDVCRSPEGEDGNEMVFCDKCNVCVHQACYGILKVPTGSWLCRTCALG) adopts a PHD-type 1 zinc-finger fold. Residues 251-285 (QPKCLLCPKRGGALKPTRSGTKWVHVSCALWIPEV) form a C2HC pre-PHD-type zinc finger. Lys-298 bears the N6-acetyllysine mark. The PHD-type 2 zinc-finger motif lies at 309–365 (LSCSLCKECTGTCIQCSMPSCITAFHVTCAFDRGLEMRTILADNDEVKFKSLCQEHS). Disordered stretches follow at residues 362-383 (QEHS…PSQA), 517-555 (REPS…AGPE), and 622-817 (SFMR…REAG). Over residues 522-535 (RRSKGKKNDSKRKG) the composition is skewed to basic residues. Positions 536–552 (REGPKGSSPEKKEKVKA) are enriched in basic and acidic residues. Over residues 637–650 (KARGRTRLPAKKKP) the composition is skewed to basic residues. Basic and acidic residues predominate over residues 776-786 (ERPKVSLHFDT). The span at 792–806 (FSDEEMSDSEVEAED) shows a compositional bias: acidic residues.

It belongs to the JADE family. In terms of assembly, component of the HBO1 complex composed at least of ING4 or ING5, MYST2/HBO1, MEAF6, and one of JADE1, JADE2 and JADE3. Interacts (via C-terminus) with KDM1A (via AOD/Tower domain).

It carries out the reaction S-ubiquitinyl-[E2 ubiquitin-conjugating enzyme]-L-cysteine + [acceptor protein]-L-lysine = [E2 ubiquitin-conjugating enzyme]-L-cysteine + N(6)-ubiquitinyl-[acceptor protein]-L-lysine.. It participates in protein modification; protein ubiquitination. Functionally, scaffold subunit of some HBO1 complexes, which have a histone H4 acetyltransferase activity. Acts as a E3 ubiquitin-protein ligase mediating the ubiquitination and subsequent proteasomal degradation of target protein histone demethylase KDM1A. Also acts as a ubiquitin ligase E3 toward itself. Positive regulator of neurogenesis. This chain is E3 ubiquitin-protein ligase Jade-2 (Jade2), found in Mus musculus (Mouse).